A 144-amino-acid polypeptide reads, in one-letter code: Large ribosomal subunit protein uL16 (144 aa).

It belongs to the universal ribosomal protein uL16 family. Part of the 50S ribosomal subunit.

Its function is as follows. Binds 23S rRNA and is also seen to make contacts with the A and possibly P site tRNAs. The protein is Large ribosomal subunit protein uL16 of Lactiplantibacillus plantarum (strain ATCC BAA-793 / NCIMB 8826 / WCFS1) (Lactobacillus plantarum).